The sequence spans 352 residues: Zinc finger protein 185 (352 aa).

Disordered regions lie at residues 1–73 and 86–121; these read MTTE…ELQS and DVLP…ITPP. At S18 the chain carries Phosphoserine. Over residues 61–72 the composition is skewed to polar residues; that stretch reads KKTTSSPTQELQ. Phosphothreonine is present on T137. Over residues 251–268 the composition is skewed to polar residues; that stretch reads VSSGKPVSSHCDSPSSIE. The interval 251-287 is disordered; sequence VSSGKPVSSHCDSPSSIEDSLDLAKKPPHEGTPSERP. Basic and acidic residues predominate over residues 272–287; it reads DLAKKPPHEGTPSERP. The 56-residue stretch at 292 to 347 folds into the LIM zinc-binding domain; it reads CTYCSHEIQDCPKITLEHLGICCHEYCFKCGICNKPMGDLLDQIFIHRDTIHCGKC.

Expressed in skin, kidney, ovary, testis. Also expressed in brain, cartilage, heart, lung, spleen and thymus.

It is found in the cytoplasm. The protein resides in the cytoskeleton. Its subcellular location is the cell junction. It localises to the focal adhesion. May be involved in the regulation of cellular proliferation and/or differentiation. The chain is Zinc finger protein 185 (Znf185) from Mus musculus (Mouse).